The sequence spans 341 residues: Phosphoribosylformylglycinamidine cyclo-ligase (341 aa).

Belongs to the AIR synthase family.

The protein localises to the cytoplasm. The catalysed reaction is 2-formamido-N(1)-(5-O-phospho-beta-D-ribosyl)acetamidine + ATP = 5-amino-1-(5-phospho-beta-D-ribosyl)imidazole + ADP + phosphate + H(+). It functions in the pathway purine metabolism; IMP biosynthesis via de novo pathway; 5-amino-1-(5-phospho-D-ribosyl)imidazole from N(2)-formyl-N(1)-(5-phospho-D-ribosyl)glycinamide: step 2/2. This chain is Phosphoribosylformylglycinamidine cyclo-ligase, found in Xanthomonas campestris pv. campestris (strain 8004).